We begin with the raw amino-acid sequence, 229 residues long: Uracil-DNA glycosylase (229 aa).

D65 (proton acceptor) is an active-site residue.

This sequence belongs to the uracil-DNA glycosylase (UDG) superfamily. UNG family.

Its subcellular location is the cytoplasm. The enzyme catalyses Hydrolyzes single-stranded DNA or mismatched double-stranded DNA and polynucleotides, releasing free uracil.. Its function is as follows. Excises uracil residues from the DNA which can arise as a result of misincorporation of dUMP residues by DNA polymerase or due to deamination of cytosine. This is Uracil-DNA glycosylase from Latilactobacillus sakei subsp. sakei (strain 23K) (Lactobacillus sakei subsp. sakei).